Here is a 252-residue protein sequence, read N- to C-terminus: Hydroxyacylglutathione hydrolase (252 aa).

His54, His56, Asp58, His59, His111, Asp128, and His166 together coordinate Zn(2+).

The protein belongs to the metallo-beta-lactamase superfamily. Glyoxalase II family. As to quaternary structure, monomer. Requires Zn(2+) as cofactor.

It catalyses the reaction an S-(2-hydroxyacyl)glutathione + H2O = a 2-hydroxy carboxylate + glutathione + H(+). Its pathway is secondary metabolite metabolism; methylglyoxal degradation; (R)-lactate from methylglyoxal: step 2/2. Functionally, thiolesterase that catalyzes the hydrolysis of S-D-lactoyl-glutathione to form glutathione and D-lactic acid. The polypeptide is Hydroxyacylglutathione hydrolase (Photobacterium profundum (strain SS9)).